The sequence spans 209 residues: ATP synthase subunit b', chloroplastic (209 aa).

Residues Met1 to Ala62 constitute a chloroplast transit peptide. The helical transmembrane segment at Ile67 to Phe87 threads the bilayer.

Belongs to the ATPase B chain family. F-type ATPases have 2 components, F(1) - the catalytic core - and F(0) - the membrane proton channel. F(1) has five subunits: alpha(3), beta(3), gamma(1), delta(1), epsilon(1). F(0) has four main subunits: a(1), b(1), b'(1) and c(10-14). The alpha and beta chains form an alternating ring which encloses part of the gamma chain. F(1) is attached to F(0) by a central stalk formed by the gamma and epsilon chains, while a peripheral stalk is formed by the delta, b and b' chains.

It is found in the plastid. The protein resides in the chloroplast thylakoid membrane. F(1)F(0) ATP synthase produces ATP from ADP in the presence of a proton or sodium gradient. F-type ATPases consist of two structural domains, F(1) containing the extramembraneous catalytic core and F(0) containing the membrane proton channel, linked together by a central stalk and a peripheral stalk. During catalysis, ATP synthesis in the catalytic domain of F(1) is coupled via a rotary mechanism of the central stalk subunits to proton translocation. Functionally, component of the F(0) channel, it forms part of the peripheral stalk, linking F(1) to F(0). The b'-subunit is a diverged and duplicated form of b found in plants and photosynthetic bacteria. This is ATP synthase subunit b', chloroplastic from Chlamydomonas reinhardtii (Chlamydomonas smithii).